A 466-amino-acid polypeptide reads, in one-letter code: Putative multidrug resistance protein MdtD (466 aa).

A run of 14 helical transmembrane segments spans residues 11–31 (LWIVAFGFFMQTLDTTIVNTA), 48–68 (SVIVSYVLTVAVMLPASGWLA), 71–91 (IGVKNIFFAAILLFTLGSLLC), 105–125 (VIQGIGGAMMVPVGRLTVMKI), 137–157 (FVTLPGQIGPLLGPALGGFLV), 164–184 (WIFLINLPVGIIGALATWFLM), 194–214 (FDISGFVWLAVGMATLTLALD), 218–238 (SLGIPPIAIFALIAIGLIALL), 262–282 (FSIGLTGGLLARIGSGMLPFM), 292–312 (GFSPFHAGLMMVPMVLGSMGI), 328–347 (VLVASTLLLALVTALFALVA), 351–370 (WIWMIPVVLFFLGTVNAIRF), 402–422 (SLGVSIAGILLGIFSQPHIAA), and 429–449 (TVFLYTYLSMVVIIALPALIF).

The protein belongs to the major facilitator superfamily. TCR/Tet family.

Its subcellular location is the cell inner membrane. In Pectobacterium atrosepticum (strain SCRI 1043 / ATCC BAA-672) (Erwinia carotovora subsp. atroseptica), this protein is Putative multidrug resistance protein MdtD.